The chain runs to 465 residues: Cysteine--tRNA ligase (465 aa).

A Zn(2+)-binding site is contributed by Cys-27. A 'HIGH' region motif is present at residues 29 to 39 (PTVYDDAHLGH). A disordered region spans residues 153-173 (DISHKVSDDDTQSRVEHNSEK). Cys-208, His-237, and Glu-241 together coordinate Zn(2+). Residues 269 to 273 (KMSKS) carry the 'KMSKS' region motif. Lys-272 lines the ATP pocket.

This sequence belongs to the class-I aminoacyl-tRNA synthetase family. In terms of assembly, monomer. It depends on Zn(2+) as a cofactor.

The protein localises to the cytoplasm. It catalyses the reaction tRNA(Cys) + L-cysteine + ATP = L-cysteinyl-tRNA(Cys) + AMP + diphosphate. The protein is Cysteine--tRNA ligase of Sulfurovum sp. (strain NBC37-1).